Consider the following 657-residue polypeptide: 1-deoxy-D-xylulose-5-phosphate synthase (657 aa).

Residues His-73 and 113–115 (SHA) each bind thiamine diphosphate. Mg(2+) is bound at residue Asp-145. Residues 146 to 147 (GA), Asn-175, Tyr-293, and Glu-375 contribute to the thiamine diphosphate site. Asn-175 is a binding site for Mg(2+).

It belongs to the transketolase family. DXPS subfamily. As to quaternary structure, homodimer. Mg(2+) serves as cofactor. Thiamine diphosphate is required as a cofactor.

It catalyses the reaction D-glyceraldehyde 3-phosphate + pyruvate + H(+) = 1-deoxy-D-xylulose 5-phosphate + CO2. Its pathway is metabolic intermediate biosynthesis; 1-deoxy-D-xylulose 5-phosphate biosynthesis; 1-deoxy-D-xylulose 5-phosphate from D-glyceraldehyde 3-phosphate and pyruvate: step 1/1. In terms of biological role, catalyzes the acyloin condensation reaction between C atoms 2 and 3 of pyruvate and glyceraldehyde 3-phosphate to yield 1-deoxy-D-xylulose-5-phosphate (DXP). This Paenarthrobacter aurescens (strain TC1) protein is 1-deoxy-D-xylulose-5-phosphate synthase.